The sequence spans 229 residues: Enolase-phosphatase E1 (229 aa).

Residues 207-229 (RDPASHHPQVQRFDDIHPEQIPA) form a disordered region. Basic and acidic residues predominate over residues 218–229 (RFDDIHPEQIPA).

The protein belongs to the HAD-like hydrolase superfamily. MasA/MtnC family. As to quaternary structure, monomer. Mg(2+) serves as cofactor.

The enzyme catalyses 5-methylsulfanyl-2,3-dioxopentyl phosphate + H2O = 1,2-dihydroxy-5-(methylsulfanyl)pent-1-en-3-one + phosphate. It functions in the pathway amino-acid biosynthesis; L-methionine biosynthesis via salvage pathway; L-methionine from S-methyl-5-thio-alpha-D-ribose 1-phosphate: step 3/6. It participates in amino-acid biosynthesis; L-methionine biosynthesis via salvage pathway; L-methionine from S-methyl-5-thio-alpha-D-ribose 1-phosphate: step 4/6. Its function is as follows. Bifunctional enzyme that catalyzes the enolization of 2,3-diketo-5-methylthiopentyl-1-phosphate (DK-MTP-1-P) into the intermediate 2-hydroxy-3-keto-5-methylthiopentenyl-1-phosphate (HK-MTPenyl-1-P), which is then dephosphorylated to form the acireductone 1,2-dihydroxy-3-keto-5-methylthiopentene (DHK-MTPene). In Klebsiella pneumoniae subsp. pneumoniae (strain ATCC 700721 / MGH 78578), this protein is Enolase-phosphatase E1.